Consider the following 320-residue polypeptide: Ribose-phosphate pyrophosphokinase (320 aa).

41 to 43 (NDN) is an ATP binding site. 2 residues coordinate Mg(2+): His134 and Asp175. Lys198 is an active-site residue. Residues Arg200 and Asp224 each coordinate D-ribose 5-phosphate.

This sequence belongs to the ribose-phosphate pyrophosphokinase family. Class I subfamily. Homohexamer. The cofactor is Mg(2+).

Its subcellular location is the cytoplasm. It catalyses the reaction D-ribose 5-phosphate + ATP = 5-phospho-alpha-D-ribose 1-diphosphate + AMP + H(+). The protein operates within metabolic intermediate biosynthesis; 5-phospho-alpha-D-ribose 1-diphosphate biosynthesis; 5-phospho-alpha-D-ribose 1-diphosphate from D-ribose 5-phosphate (route I): step 1/1. In terms of biological role, involved in the biosynthesis of the central metabolite phospho-alpha-D-ribosyl-1-pyrophosphate (PRPP) via the transfer of pyrophosphoryl group from ATP to 1-hydroxyl of ribose-5-phosphate (Rib-5-P). In Deinococcus radiodurans (strain ATCC 13939 / DSM 20539 / JCM 16871 / CCUG 27074 / LMG 4051 / NBRC 15346 / NCIMB 9279 / VKM B-1422 / R1), this protein is Ribose-phosphate pyrophosphokinase.